Reading from the N-terminus, the 388-residue chain is Succinate--CoA ligase [ADP-forming] subunit beta (388 aa).

The ATP-grasp domain maps to 9-244 (KKLFAEYGLP…PSQDDPREAH (236 aa)). ATP-binding positions include K46, 53–55 (GRG), E99, T102, and E107. Mg(2+) is bound by residues N199 and D213. Residues N264 and 321-323 (GIV) contribute to the substrate site.

This sequence belongs to the succinate/malate CoA ligase beta subunit family. Heterotetramer of two alpha and two beta subunits. It depends on Mg(2+) as a cofactor.

It carries out the reaction succinate + ATP + CoA = succinyl-CoA + ADP + phosphate. It catalyses the reaction GTP + succinate + CoA = succinyl-CoA + GDP + phosphate. The protein operates within carbohydrate metabolism; tricarboxylic acid cycle; succinate from succinyl-CoA (ligase route): step 1/1. In terms of biological role, succinyl-CoA synthetase functions in the citric acid cycle (TCA), coupling the hydrolysis of succinyl-CoA to the synthesis of either ATP or GTP and thus represents the only step of substrate-level phosphorylation in the TCA. The beta subunit provides nucleotide specificity of the enzyme and binds the substrate succinate, while the binding sites for coenzyme A and phosphate are found in the alpha subunit. This chain is Succinate--CoA ligase [ADP-forming] subunit beta, found in Aeromonas salmonicida (strain A449).